Reading from the N-terminus, the 270-residue chain is Formamidopyrimidine-DNA glycosylase (270 aa).

Pro2 functions as the Schiff-base intermediate with DNA in the catalytic mechanism. Glu3 serves as the catalytic Proton donor. Lys59 serves as the catalytic Proton donor; for beta-elimination activity. The DNA site is built by His91, Arg110, and Lys151. The FPG-type zinc-finger motif lies at 236–270 (RVYGRDKEPCVTCGQQVKSKVLGGRNTFWCSRCQK). Arg260 serves as the catalytic Proton donor; for delta-elimination activity.

Belongs to the FPG family. In terms of assembly, monomer. Zn(2+) serves as cofactor.

The enzyme catalyses Hydrolysis of DNA containing ring-opened 7-methylguanine residues, releasing 2,6-diamino-4-hydroxy-5-(N-methyl)formamidopyrimidine.. It carries out the reaction 2'-deoxyribonucleotide-(2'-deoxyribose 5'-phosphate)-2'-deoxyribonucleotide-DNA = a 3'-end 2'-deoxyribonucleotide-(2,3-dehydro-2,3-deoxyribose 5'-phosphate)-DNA + a 5'-end 5'-phospho-2'-deoxyribonucleoside-DNA + H(+). Functionally, involved in base excision repair of DNA damaged by oxidation or by mutagenic agents. Acts as a DNA glycosylase that recognizes and removes damaged bases. Has a preference for oxidized purines, such as 7,8-dihydro-8-oxoguanine (8-oxoG). Has AP (apurinic/apyrimidinic) lyase activity and introduces nicks in the DNA strand. Cleaves the DNA backbone by beta-delta elimination to generate a single-strand break at the site of the removed base with both 3'- and 5'-phosphates. The protein is Formamidopyrimidine-DNA glycosylase of Bdellovibrio bacteriovorus (strain ATCC 15356 / DSM 50701 / NCIMB 9529 / HD100).